A 250-amino-acid polypeptide reads, in one-letter code: Superoxide dismutase 1 copper chaperone (250 aa).

The region spanning S4–I67 is the HMA domain. Cu cation is bound by residues C15, C18, C229, and C231.

The protein belongs to the CCS1 family. It depends on Cu(2+) as a cofactor.

It is found in the cytoplasm. Its function is as follows. Copper chaperone for superoxide dismutase 1 (SOD1). Binds copper ions and delivers them specifically to SOD1. The polypeptide is Superoxide dismutase 1 copper chaperone (CCS1) (Debaryomyces hansenii (strain ATCC 36239 / CBS 767 / BCRC 21394 / JCM 1990 / NBRC 0083 / IGC 2968) (Yeast)).